Consider the following 325-residue polypeptide: Zinc-type alcohol dehydrogenase-like protein C337.11 (325 aa).

This sequence belongs to the zinc-containing alcohol dehydrogenase family. Quinone oxidoreductase subfamily.

The protein resides in the cytoplasm. The protein localises to the nucleus. In Schizosaccharomyces pombe (strain 972 / ATCC 24843) (Fission yeast), this protein is Zinc-type alcohol dehydrogenase-like protein C337.11.